Here is a 437-residue protein sequence, read N- to C-terminus: Rhoptry apical surface protein 2 (437 aa).

Residues 45-179 enclose the C2 domain; it reads GCLGSLFFYL…PRINLSLHKL (135 aa). Residues 230–338 enclose the PH domain; that stretch reads EGPLERLNAN…FIEKLRAYRE (109 aa). The disordered stretch occupies residues 341 to 437; that stretch reads STRVPSQKGA…SVVGDEEPQT (97 aa). Residues 375 to 384 show a composition bias toward basic residues; it reads RKSGGKKSRR.

As to quaternary structure, interacts with RASP1. Interacts with RASP3.

It is found in the cytoplasmic vesicle. It localises to the secretory vesicle. Its subcellular location is the rhoptry membrane. Essential for tachyzoite invasion of host cells by controlling rhoptry secretion. Binds to phosphatidic acid (PA) and phosphatidylinositol 4,5-bisphosphate (PIP2) lipids and thus, likely contributes to the assembly of the machinery that docks or primes the rhoptry to the parasite cell membrane prior to the fusion with the host cell membrane. The protein is Rhoptry apical surface protein 2 of Toxoplasma gondii (strain ATCC 50853 / GT1).